A 302-amino-acid chain; its full sequence is Recombination-associated protein RdgC (302 aa).

The protein belongs to the RdgC family.

It localises to the cytoplasm. The protein localises to the nucleoid. In terms of biological role, may be involved in recombination. This Mannheimia succiniciproducens (strain KCTC 0769BP / MBEL55E) protein is Recombination-associated protein RdgC.